A 229-amino-acid polypeptide reads, in one-letter code: Cytidylate kinase (229 aa).

An ATP-binding site is contributed by 15–23 (GPAASGKST).

The protein belongs to the cytidylate kinase family. Type 1 subfamily.

It is found in the cytoplasm. It catalyses the reaction CMP + ATP = CDP + ADP. The enzyme catalyses dCMP + ATP = dCDP + ADP. This chain is Cytidylate kinase, found in Herpetosiphon aurantiacus (strain ATCC 23779 / DSM 785 / 114-95).